The following is a 161-amino-acid chain: Heme transporter hrg-6 (161 aa).

The next 4 membrane-spanning stretches (helical) occupy residues 13-33 (IAYT…YIFA), 38-58 (VALA…YFYL), 75-95 (VLFW…ITAI), and 115-135 (WWST…NAFI).

Belongs to the HRG family.

It is found in the membrane. Functionally, heme transporter. The chain is Heme transporter hrg-6 (hrg-6) from Caenorhabditis elegans.